The primary structure comprises 908 residues: Protein translocase subunit SecA (908 aa).

ATP contacts are provided by residues Q87, 105 to 109 (GEGKT), and D512. Positions 865–908 (GGDDGSDEMMAHTPMIRDGDKVGRNDPCPCGSGRKYKQCHGKLS) are disordered. Residues 879-888 (MIRDGDKVGR) show a composition bias toward basic and acidic residues. Residues C892, C894, C903, and H904 each contribute to the Zn(2+) site. Over residues 898–908 (RKYKQCHGKLS) the composition is skewed to basic residues.

Belongs to the SecA family. As to quaternary structure, monomer and homodimer. Part of the essential Sec protein translocation apparatus which comprises SecA, SecYEG and auxiliary proteins SecDF-YajC and YidC. Zn(2+) is required as a cofactor.

The protein resides in the cell inner membrane. The protein localises to the cytoplasm. It carries out the reaction ATP + H2O + cellular proteinSide 1 = ADP + phosphate + cellular proteinSide 2.. Functionally, part of the Sec protein translocase complex. Interacts with the SecYEG preprotein conducting channel. Has a central role in coupling the hydrolysis of ATP to the transfer of proteins into and across the cell membrane, serving both as a receptor for the preprotein-SecB complex and as an ATP-driven molecular motor driving the stepwise translocation of polypeptide chains across the membrane. The sequence is that of Protein translocase subunit SecA from Shewanella sp. (strain MR-4).